Here is a 519-residue protein sequence, read N- to C-terminus: Xylose import ATP-binding protein XylG (519 aa).

2 ABC transporter domains span residues 6–245 (MTMR…VGRE) and 262–507 (FEAR…IRPV). Position 38–45 (38–45 (GENGAGKS)) interacts with ATP.

This sequence belongs to the ABC transporter superfamily. Xylose importer (TC 3.A.1.2.4) family. The complex is composed of two ATP-binding proteins (XylG), two transmembrane proteins (XylH) and a solute-binding protein (XylF).

It localises to the cell inner membrane. The enzyme catalyses D-xylose(out) + ATP + H2O = D-xylose(in) + ADP + phosphate + H(+). Its function is as follows. Part of the ABC transporter complex XylFGH involved in xylose import. Responsible for energy coupling to the transport system. The polypeptide is Xylose import ATP-binding protein XylG (Paraburkholderia xenovorans (strain LB400)).